The chain runs to 196 residues: Interferon lambda-3 (196 aa).

Positions 1 to 21 (MTGDCMPVLVLMAAVLTVTGA) are cleaved as a signal peptide. Intrachain disulfides connect Cys37–Cys136, Cys71–Cys169, and Cys188–Cys195.

It belongs to the lambda interferon family.

The protein resides in the secreted. Functionally, cytokine with antiviral, antitumour and immunomodulatory activities. Plays a critical role in the antiviral host defense, predominantly in the epithelial tissues. Acts as a ligand for the heterodimeric class II cytokine receptor composed of IL10RB and IFNLR1, and receptor engagement leads to the activation of the JAK/STAT signaling pathway resulting in the expression of IFN-stimulated genes (ISG), which mediate the antiviral state. Has a restricted receptor distribution and therefore restricted targets: is primarily active in epithelial cells and this cell type-selective action is because of the epithelial cell-specific expression of its receptor IFNLR1. Seems not to be essential for early virus-activated host defense in vaginal infection, but plays an important role in Toll-like receptor (TLR)-induced antiviral defense. Plays a significant role in the antiviral immune defense in the intestinal epithelium. Exerts an immunomodulatory effect by up-regulating MHC class I antigen expression. The chain is Interferon lambda-3 (IFNL3) from Homo sapiens (Human).